The following is a 254-amino-acid chain: Triosephosphate isomerase (254 aa).

Residue 9-11 (NWK) coordinates substrate. His-95 serves as the catalytic Electrophile. Glu-167 serves as the catalytic Proton acceptor. Residues Gly-173, Ser-213, and 234–235 (GG) each bind substrate.

It belongs to the triosephosphate isomerase family. In terms of assembly, homodimer.

The protein localises to the cytoplasm. The enzyme catalyses D-glyceraldehyde 3-phosphate = dihydroxyacetone phosphate. Its pathway is carbohydrate biosynthesis; gluconeogenesis. The protein operates within carbohydrate degradation; glycolysis; D-glyceraldehyde 3-phosphate from glycerone phosphate: step 1/1. Functionally, involved in the gluconeogenesis. Catalyzes stereospecifically the conversion of dihydroxyacetone phosphate (DHAP) to D-glyceraldehyde-3-phosphate (G3P). In Roseiflexus sp. (strain RS-1), this protein is Triosephosphate isomerase.